Reading from the N-terminus, the 508-residue chain is Probable ligand-gated ion channel 46 (508 aa).

Residues 1-18 (MQYLQFLSLVVLLLMCHA) form the signal peptide. The Extracellular segment spans residues 19–274 (RKSVYRRNSP…FEFKRRAGWY (256 aa)). 4 N-linked (GlcNAc...) asparagine glycosylation sites follow: asparagine 65, asparagine 134, asparagine 175, and asparagine 201. A disulfide bond links cysteine 190 and cysteine 204. A helical membrane pass occupies residues 275–295 (ILQAYLPTYLTICISWISFAL). Residues 296–301 (GSKAIP) are Cytoplasmic-facing. A helical membrane pass occupies residues 302–321 (ARTMLGVNSLLAMTFQFGNI). At 322 to 335 (IRNLPRVSYVKAID) the chain is on the extracellular side. Residues 336–356 (VWMLSCMTFVFCSLLELAWVG) form a helical membrane-spanning segment. The Cytoplasmic portion of the chain corresponds to 357-480 (YLSREEEPTS…KQRREILAHK (124 aa)). The interval 374–407 (AQVAPKPCHPPPVQQNANNSSVHRRQKQPKNEEE) is disordered. The chain crosses the membrane as a helical span at residues 481 to 501 (IDSVSVFMFPFLFVLFNIAYW). The Extracellular segment spans residues 502 to 508 (QHYLRGY).

This sequence belongs to the ligand-gated ion channel (TC 1.A.9) family. As to expression, expressed in the nervous system, with high expression in cholinergic motor neurons and weak expression in GABAergic motor neurons.

It localises to the presynaptic cell membrane. The protein localises to the cell projection. The protein resides in the axon. Its subcellular location is the cytoplasmic vesicle. It is found in the secretory vesicle. It localises to the synaptic vesicle. Probable component of a ligand-gated anion channel. Negatively regulates synaptic transmission and synaptic vesicle release in response to acetylcholine in cholinergic motor neurons. Role in synaptic vesicle release kinetics may be in association with the ligand-gated ion channel protein acc-4. The sequence is that of Probable ligand-gated ion channel 46 from Caenorhabditis elegans.